A 595-amino-acid polypeptide reads, in one-letter code: uncharacterized protein (595 aa).

9 consecutive transmembrane segments (helical) span residues 64-84 (VVFL…LIVF), 86-106 (IFYA…IGVL), 239-259 (FYVI…PVAS), 281-301 (FYLW…GILP), 334-354 (VHFI…LFFI), 368-388 (MFGI…HFII), 504-524 (FIYV…SYIM), 547-567 (YLFQ…GILT), and 571-591 (IIAG…LFKF).

The protein to M.jannaschii FlaJ.

It is found in the cell membrane. This is an uncharacterized protein from Methanocaldococcus jannaschii (strain ATCC 43067 / DSM 2661 / JAL-1 / JCM 10045 / NBRC 100440) (Methanococcus jannaschii).